The chain runs to 941 residues: Lysine-specific demethylase 7A (941 aa).

The PHD-type zinc finger occupies 37–88 (PVYCVCRQPYDVNRFMIECDICKDWFHGSCVGVEEHHAVDIDLYHCPNCAVL). The tract at residues 97 to 114 (RRNWHRHDYTEIDDGSKP) is linker. The JmjC domain occupies 230–386 (FSDTKMSELV…MQLRCYEMEK (157 aa)). Thr-279 serves as a coordination point for substrate. Residues His-282 and Asp-284 each contribute to the Fe cation site. Residue Lys-299 participates in substrate binding. Residue His-354 coordinates Fe cation. Disordered stretches follow at residues 597–633 (QSLY…EHEE), 677–700 (TTEE…KEES), and 819–921 (QDLS…MATA). Ser-604 is modified (phosphoserine). Basic and acidic residues-rich tracts occupy residues 618-633 (MKIE…EHEE) and 685-700 (GDEK…KEES). Polar residues predominate over residues 834–876 (SEISQRVQSRNYVDSSGSSLQNGKYMQNSNLTSGACQISNGSL).

This sequence belongs to the JHDM1 histone demethylase family. JHDM1D subfamily. It depends on Fe(2+) as a cofactor.

The protein localises to the nucleus. The enzyme catalyses N(6),N(6)-dimethyl-L-lysyl(9)-[histone H3] + 2 2-oxoglutarate + 2 O2 = L-lysyl(9)-[histone H3] + 2 formaldehyde + 2 succinate + 2 CO2. It catalyses the reaction N(6),N(6)-dimethyl-L-lysyl(27)-[histone H3] + 2 2-oxoglutarate + 2 O2 = L-lysyl(27)-[histone H3] + 2 formaldehyde + 2 succinate + 2 CO2. The catalysed reaction is N(6),N(6)-dimethyl-L-lysyl(36)-[histone H3] + 2-oxoglutarate + O2 = N(6)-methyl-L-lysyl(36)-[histone H3] + formaldehyde + succinate + CO2. It carries out the reaction N(6)-methyl-L-lysyl(20)-[histone H4] + 2-oxoglutarate + O2 = L-lysyl(20)-[histone H4] + formaldehyde + succinate + CO2. In terms of biological role, histone demethylase required for brain development. Specifically demethylates dimethylated 'Lys-9', 'Lys-27' and 'Lys-36' (H3K9me2, H3K27me2, H3K36me2, respectively) of histone H3 and monomethylated histone H4 'Lys-20' residue (H4K20Me1), thereby playing a central role in histone code. Specifically binds trimethylated 'Lys-4' of histone H3 (H3K4me3), affecting histone demethylase specificity: in presence of H3K4me3, it has no demethylase activity toward H3K9me2, while it has high activity toward H3K27me2. Demethylates H3K9me2 in absence of H3K4me3. Has activity toward H4K20Me1 only when nucleosome is used as a substrate and when not histone octamer is used as substrate. This chain is Lysine-specific demethylase 7A (KDM7A), found in Homo sapiens (Human).